Here is a 1411-residue protein sequence, read N- to C-terminus: Protein RhsB (1411 aa).

Repeat copies occupy residues 330-352 (GKQVRSFTYDDKYRGRMVAHRHT), 353-374 (GRPEIRYRYDSDGRVTEQLNPA), 375-417 (GLSY…EHAD), 418-438 (GSVTQSQFDAVGRLRAQTDAA), 439-460 (GRTTEYSPDVVTGLITRITTPD), 461-481 (GRASAFYYNHHNQLTSATGPD), 482-502 (GLELRREYDELGRLIQETAPD), 503-525 (GDITRYRYDNPHSDLPCATEDAT), 526-546 (GSRKTMTWSRYGQLLSFTDCS), 547-567 (GYVTRYDHDRFGQMTAVHREE), 568-588 (GLSQYRAYDSRGQLIAVKDTQ), 589-609 (GHETRYEYNIAGDLTAVIAPD), 610-629 (GSRNGTQYDAWGKAVRTTQG), 630-650 (GLTRSMEYDAAGRVIRLTSEN), 651-671 (GSHTTFRYDVLDRLIQETGFD), 672-691 (GRTQRYHHDLTGKLIRSEDE), 692-711 (GLVTHWHYDEADRLTHRTVK), 712-734 (GETAERWQYDERGWLTDISHISE), 735-758 (GHRVAVHYRYDEKGRLTGERQTVH), 808-828 (GDTPLVEYTRDRLHRETLRSF), 829-850 (GRYELTTAYTPAGQLQSQHLNS), 851-871 (LLSDRDYTWNDNGELIRISSP), 872-894 (RQTRSYSYSTTGRLTGVHTTAAN), 895-930 (LDIRIPYATDPAGNRLPDPELHPDSTLSMWPDNRIA), 931-959 (RDAHYLYRYDRHGRLTEKTDLIPEGVIRT), 960-984 (DDERTHRYHYDSQHRLVHYTRTQYE), 985-1019 (EPLVESRYLYDPLGRRVAKRVWRRERDLTGWMSLS), and 1162-1186 (GATAWCAEYDEWGNLLNEENPHQLQ). Positions 330–1186 (GKQVRSFTYD…LNEENPHQLQ (857 aa)) are 28 X approximate tandem repeats.

The protein belongs to the RHS family.

Its function is as follows. Rhs elements have a nonessential function. They may play an important role in the natural ecology of the cell. This chain is Protein RhsB (rhsB), found in Escherichia coli (strain K12).